Here is a 1013-residue protein sequence, read N- to C-terminus: Retinoblastoma-related protein 1 (1013 aa).

Positions 406 to 607 (TPVSTAMTTA…EKGSSMYNSL (202 aa)) are domain A. Residues 406–858 (TPVSTAMTTA…NEIFIPAVKP (453 aa)) are pocket. Residues 608–727 (IVARPSLALE…PGGGGETCAE (120 aa)) form a spacer region. The domain B stretch occupies residues 728-858 (TGINIFFTKI…NEIFIPAVKP (131 aa)). Phosphoserine occurs at positions 885 and 898. Residues 979–1013 (VANSLNLQNQNQNQNGSDASSSGGAAPLKTEPTDS) are disordered. The segment covering 980-1004 (ANSLNLQNQNQNQNGSDASSSGGAA) has biased composition (low complexity).

This sequence belongs to the retinoblastoma protein (RB) family. In terms of assembly, interacts with the begomovirus replication-associated protein (Rep), the nanovirus Clink protein, the mastrevirus RepA protein, E2FA, E2FB and E2FC. Interacts with MSI1 through its Domain A. Interacts with ATPK1/S6K1. Interacts with SCR. Interacts with HAT2. Interacts with FAMA. Interacts with MYB124 and MYB88. Component of a DREAM-like complex which modulates a variety of developmentally regulated genes and of the mitotic genes in proliferating and differentiated cells. Associates with MYB3R3 in both earlier and later stages of leaves development. Interacts with MYB3R4 only at early stages of leaves development. In terms of processing, highly phosphorylated by CDKA-1 during G1 to S phase transition. Once hyper-phosphorylated, becomes inactive and unable to interact with E2F. Ubiquitinated. Subject to proteasome-dependent degradation during sucrose starvation. Expressed in actively dividing cells. Detected in the shoot apical meristem, in young leaf primordia and in both sporophytic tissue and the megagametophyte.

The protein resides in the nucleus. Key regulator of entry into cell division. Acts as a transcription repressor of E2F target genes, whose activity is required for progress from the G1 to the S phase of the cell cycle. Hyperphosphorylation by CDKA-1 prevents the binding to E2F transcription factors, allowing G1 to S phase transition to operate. Forms a stable complex with E2FA that functions in maintaining cell proliferation through repression of cell differentiation. Plays a central role in the mechanism controlling meristem cell differentiation, cell fate establishment and cell fate maintenance during organogenesis and gametogenesis. Required during lateral organ production. Also involved in controlling asymmetric divisions of stem cells in different stem cell niches. Acts as a negative regulator of cell proliferation during leaf and gametophytes development. At later stages of development, restricts the progression through additional endocycles. In the leaf, plays a role in the control of the mesophyll differentiation. Another role is its implication in the regulation of imprinted genes. Acts together with MSI1 to repress the expression of MET1 during gametogenesis. This in turn activates expression of the imprinted genes FIS2 and FWA. Regulates many genes of the polycomb repressive complex 2 (PRC2). Plays an important role in meiosis affecting different aspects of this complex process. Functions as a positive regulator of the developmental switch from embryonic heterotrophic growth to autotrophic growth. Interaction with mastrevirus RepA or nanovirus Clink protein disrupts the RBR/E2F interaction and releases the transcription of replicative enzymes needed by the virus by increasing the E2F DNA-binding activity. This Arabidopsis thaliana (Mouse-ear cress) protein is Retinoblastoma-related protein 1 (RBR1).